Here is a 998-residue protein sequence, read N- to C-terminus: Mis18-binding protein 1 (998 aa).

A Glycyl lysine isopeptide (Lys-Gly) (interchain with G-Cter in SUMO2) cross-link involves residue K7. S9, S109, and S134 each carry phosphoserine. Positions 122–153 are disordered; the sequence is QRDKQEQLTRSSSMLGSPQGEHTKDFPPNTDK. Basic and acidic residues predominate over residues 142 to 153; that stretch reads EHTKDFPPNTDK. A phosphoserine mark is found at S169 and S258. The SANTA domain occupies 336-422; the sequence is VHLQEWMIKV…MFGFPHNWKE (87 aa). Disordered regions lie at residues 438 to 460 and 476 to 502; these read KTRQETARVQEKQKSKKKDAEDK and DNSLERTEVPTDPLNSLEQPTSGKERR. Residues 488 to 497 show a composition bias toward polar residues; the sequence is PLNSLEQPTS. Phosphothreonine occurs at positions 516 and 578. Phosphoserine occurs at positions 638 and 639. The segment at 638-660 is disordered; it reads SSEENEVEIKSRTRARNTKERLN. Basic and acidic residues predominate over residues 644 to 660; the sequence is VEIKSRTRARNTKERLN. Residue T688 is modified to Phosphothreonine. A Glycyl lysine isopeptide (Lys-Gly) (interchain with G-Cter in SUMO2) cross-link involves residue K707. At S726 the chain carries Phosphoserine. The SANT domain occupies 741-796; the sequence is TDDEEWSEQELQKLHCAFTSLPKHKPGFWSDVAMAVGSRTADECQKKYTEEPQGQG. Residue K765 forms a Glycyl lysine isopeptide (Lys-Gly) (interchain with G-Cter in SUMO2) linkage. The segment at 784–821 is disordered; that stretch reads CQKKYTEEPQGQGSRKHGSKKKQANKVQNGEKDSADAK. Basic residues predominate over residues 797 to 807; it reads SRKHGSKKKQA. Residues 812 to 821 show a composition bias toward basic and acidic residues; the sequence is NGEKDSADAK. Residues K821, K828, and K847 each participate in a glycyl lysine isopeptide (Lys-Gly) (interchain with G-Cter in SUMO2) cross-link. S872 carries the post-translational modification Phosphoserine. K948 participates in a covalent cross-link: Glycyl lysine isopeptide (Lys-Gly) (interchain with G-Cter in SUMO2). S955 and S985 each carry phosphoserine. Positions 976–998 are disordered; that stretch reads SKYFIDDTESDEEEKDYYFSNSD. Positions 981–990 are enriched in acidic residues; the sequence is DDTESDEEEK.

Interacts with SP1. Interacts with MIS18A. Identified in a complex containing MIS18A, OIP5/MIS18B, MIS18BP1, RBBP7 and RBBP4. Interacts with KAT7/HBO1. Interacts (via N-terminus) with FLNA (via N-terminus).

It localises to the nucleus. It is found in the chromosome. Its subcellular location is the centromere. Required for recruitment of CENPA to centromeres and normal chromosome segregation during mitosis. In Mus musculus (Mouse), this protein is Mis18-binding protein 1 (Mis18bp1).